Here is a 259-residue protein sequence, read N- to C-terminus: Ribonuclease PH (259 aa).

Residues arginine 88 and 126–128 (GTR) each bind phosphate.

The protein belongs to the RNase PH family. Homohexameric ring arranged as a trimer of dimers.

The catalysed reaction is tRNA(n+1) + phosphate = tRNA(n) + a ribonucleoside 5'-diphosphate. Phosphorolytic 3'-5' exoribonuclease that plays an important role in tRNA 3'-end maturation. Removes nucleotide residues following the 3'-CCA terminus of tRNAs; can also add nucleotides to the ends of RNA molecules by using nucleoside diphosphates as substrates, but this may not be physiologically important. Probably plays a role in initiation of 16S rRNA degradation (leading to ribosome degradation) during starvation. The polypeptide is Ribonuclease PH (Mycolicibacterium paratuberculosis (strain ATCC BAA-968 / K-10) (Mycobacterium paratuberculosis)).